The primary structure comprises 92 residues: Small ribosomal subunit protein bS18 (92 aa).

Belongs to the bacterial ribosomal protein bS18 family. In terms of assembly, part of the 30S ribosomal subunit. Forms a tight heterodimer with protein bS6.

Its function is as follows. Binds as a heterodimer with protein bS6 to the central domain of the 16S rRNA, where it helps stabilize the platform of the 30S subunit. This is Small ribosomal subunit protein bS18 from Ralstonia nicotianae (strain ATCC BAA-1114 / GMI1000) (Ralstonia solanacearum).